We begin with the raw amino-acid sequence, 332 residues long: Thiamine-binding periplasmic protein (332 aa).

The signal sequence occupies residues 1–20 (MKLLKLTLISTALFSTAALA). Residues Trp202 and 220–223 (YSTS) each bind thiamine.

The protein belongs to the bacterial solute-binding protein 1 family. As to quaternary structure, the complex is composed of two ATP-binding proteins (ThiQ), two transmembrane proteins (ThiP) and a solute-binding protein (ThiB).

Its subcellular location is the periplasm. Its function is as follows. Part of the ABC transporter complex ThiBPQ involved in thiamine import. The chain is Thiamine-binding periplasmic protein (thiB) from Haemophilus influenzae (strain ATCC 51907 / DSM 11121 / KW20 / Rd).